The chain runs to 75 residues: uncharacterized protein (75 aa).

The dksA C4-type zinc-finger motif lies at 43–67; sequence CSECGLPIPTTRLRANPFAHRCVSC.

This is an uncharacterized protein from Haemophilus influenzae (strain ATCC 51907 / DSM 11121 / KW20 / Rd).